The primary structure comprises 576 residues: MNVKTEPDRSRDVSQPLDKLGPDETLKANSDYLRGTIKQSLADEITAAVTANDAKLMKFFGIYQQDDRDIRDERRRQKLEAAFSFMVRVRLPGGVCSPSQWLKLDALGRAYGGDTLRLTTRQTFQLHRIMKHNMRAVIQGLRDVLLDTRAACGDDTRGVMCTVNPDLSKLHAEVYALAKQASDHAVHRTGAYQEIWYEAERQDTDGPEEPFYGRTYMPRKFKIGFAIPPSNDIDVYGQDLGFIAIARRGKLKGFNVAIGGGLGRTDQSPKTYPRLATVIGYIDADKLFPTIDAVMSVQRDYGDRLDRLHARFKYTIDEKGLDWIKAEAERRLGFALEPAQPYTFTSNGDPLGWVKGEDGREHCTLFIQNGRVINTPDHPMMDGLRAIAQVHKGMFRITPNQNLIISDIAPEDRPAIAALMKQYGLDQFETRSGLRLNSMACVALPTCGLAMAESERYLPDLVTKIEAILNVHGLKDDPITIRMTGCPNGCSRPYIAEIGLTGRAPGKYNLYLGGGFHGERLNKMYLENVGEGAILEALDKTLGHYARDRKPGEHFGDFAIRAGYVVEVKEGRFFND.

Basic and acidic residues predominate over residues 1–12; sequence MNVKTEPDRSRD. The disordered stretch occupies residues 1 to 25; that stretch reads MNVKTEPDRSRDVSQPLDKLGPDET. [4Fe-4S] cluster contacts are provided by cysteine 441, cysteine 447, cysteine 486, and cysteine 490. Residue cysteine 490 participates in siroheme binding.

The protein belongs to the nitrite and sulfite reductase 4Fe-4S domain family. As to quaternary structure, alpha(8)-beta(8). The alpha component is a flavoprotein, the beta component is a hemoprotein. Siroheme serves as cofactor. [4Fe-4S] cluster is required as a cofactor.

The enzyme catalyses hydrogen sulfide + 3 NADP(+) + 3 H2O = sulfite + 3 NADPH + 4 H(+). Its pathway is sulfur metabolism; hydrogen sulfide biosynthesis; hydrogen sulfide from sulfite (NADPH route): step 1/1. Component of the sulfite reductase complex that catalyzes the 6-electron reduction of sulfite to sulfide. This is one of several activities required for the biosynthesis of L-cysteine from sulfate. The sequence is that of Sulfite reductase [NADPH] hemoprotein beta-component from Nitrobacter hamburgensis (strain DSM 10229 / NCIMB 13809 / X14).